The following is a 386-amino-acid chain: Methionine aminopeptidase 1 (386 aa).

Ala2 carries the N-acetylalanine modification. The C6H2-type zinc finger occupies Thr6–Lys59. Zn(2+)-binding residues include Cys9, Cys14, Cys22, Cys25, Cys36, Cys40, His48, His52, and Lys53. An a protein-binding site is contributed by His203. Zn(2+) contacts are provided by Asp220, Asp231, and His294. His301 contributes to the a protein binding site. Residues Glu327 and Glu358 each contribute to the Zn(2+) site.

Belongs to the peptidase M24A family. Methionine aminopeptidase type 1 subfamily. In terms of assembly, associates with the 60S ribosomal subunit of the 80S translational complex. Zn(2+) serves as cofactor. Co(2+) is required as a cofactor. Requires Mn(2+) as cofactor. It depends on Fe(2+) as a cofactor.

It is found in the cytoplasm. The enzyme catalyses Release of N-terminal amino acids, preferentially methionine, from peptides and arylamides.. Functionally, cotranslationally removes the N-terminal methionine from nascent proteins. The N-terminal methionine is often cleaved when the second residue in the primary sequence is small and uncharged (Met-Ala-, Cys, Gly, Pro, Ser, Thr, or Val). This chain is Methionine aminopeptidase 1 (Metap1), found in Mus musculus (Mouse).